The primary structure comprises 165 residues: Xanthine-guanine phosphoribosyltransferase (165 aa).

5-phospho-alpha-D-ribose 1-diphosphate is bound by residues 41 to 42 and 98 to 106; these read RG and DDLTDTGKT. A Mg(2+)-binding site is contributed by aspartate 99. Guanine-binding residues include aspartate 102 and isoleucine 145. Aspartate 102 and isoleucine 145 together coordinate xanthine. Residues 102-106 and 144-145 contribute to the GMP site; these read DTGKT and WI.

Belongs to the purine/pyrimidine phosphoribosyltransferase family. XGPT subfamily. In terms of assembly, homotetramer. The cofactor is Mg(2+).

It is found in the cell inner membrane. It carries out the reaction GMP + diphosphate = guanine + 5-phospho-alpha-D-ribose 1-diphosphate. The catalysed reaction is XMP + diphosphate = xanthine + 5-phospho-alpha-D-ribose 1-diphosphate. It catalyses the reaction IMP + diphosphate = hypoxanthine + 5-phospho-alpha-D-ribose 1-diphosphate. Its pathway is purine metabolism; GMP biosynthesis via salvage pathway; GMP from guanine: step 1/1. It functions in the pathway purine metabolism; XMP biosynthesis via salvage pathway; XMP from xanthine: step 1/1. Functionally, purine salvage pathway enzyme that catalyzes the transfer of the ribosyl-5-phosphate group from 5-phospho-alpha-D-ribose 1-diphosphate (PRPP) to the N9 position of the 6-oxopurines guanine and xanthine to form the corresponding ribonucleotides GMP (guanosine 5'-monophosphate) and XMP (xanthosine 5'-monophosphate), with the release of PPi. To a lesser extent, also acts on hypoxanthine. The chain is Xanthine-guanine phosphoribosyltransferase from Brucella canis (strain ATCC 23365 / NCTC 10854 / RM-666).